A 768-amino-acid polypeptide reads, in one-letter code: Degenerin mec-4 (768 aa).

At 1–109 (MSWMQNLKNY…GEAPNVYYRA (109 aa)) the chain is on the cytoplasmic side. Residues 110-130 (VWVMLFLGCMIMLYLNAQSVL) traverse the membrane as a helical segment. Topologically, residues 131 to 718 (DKYNRNEKIV…VNLLADFGGQ (588 aa)) are extracellular. 2 disordered regions span residues 187-221 (AGGNKEHDGEKEVITEAPTTPAPTTKPSRRRGKRD) and 237-260 (GSQGSSEQEDKDDEKEEEMHETTT). The segment covering 189-200 (GNKEHDGEKEVI) has biased composition (basic and acidic residues). A compositionally biased stretch (low complexity) spans 203 to 212 (APTTPAPTTK). The span at 243-252 (EQEDKDDEKE) shows a compositional bias: acidic residues. N-linked (GlcNAc...) asparagine glycosylation is found at asparagine 336, asparagine 357, asparagine 480, asparagine 484, asparagine 503, and asparagine 671. A helical transmembrane segment spans residues 719 to 739 (LGLWCGISFLTCCEFVFLFLE). At 740 to 768 (TAYMSAEHNYSLYKKKKAEKAKKVASGSF) the chain is on the cytoplasmic side.

It belongs to the amiloride-sensitive sodium channel (TC 1.A.6) family. In terms of assembly, the channel is probably composed of at least the mec-2, mec-4, mec-6 and mec-10 subunits.

The protein resides in the membrane. Functionally, probable sodium channel subunit. May be needed for mechanosensory transduction (touch sensitivity). Negatively regulates the turning step of male mating behavior. This chain is Degenerin mec-4 (mec-4), found in Caenorhabditis briggsae.